A 592-amino-acid polypeptide reads, in one-letter code: A-type ATP synthase subunit A (592 aa).

234–241 (GPFGSGKT) is an ATP binding site.

This sequence belongs to the ATPase alpha/beta chains family. In terms of assembly, has multiple subunits with at least A(3), B(3), C, D, E, F, H, I and proteolipid K(x).

It localises to the cell membrane. It carries out the reaction ATP + H2O + 4 H(+)(in) = ADP + phosphate + 5 H(+)(out). Functionally, produces ATP from ADP in the presence of a proton gradient across the membrane. The archaeal alpha chain is a catalytic subunit. Its function is as follows. Component of the A-type ATP synthase that produces ATP from ADP in the presence of a proton gradient across the membrane. The A chain is the catalytic subunit. The protein is A-type ATP synthase subunit A of Sulfolobus acidocaldarius (strain ATCC 33909 / DSM 639 / JCM 8929 / NBRC 15157 / NCIMB 11770).